The chain runs to 415 residues: Peptide chain release factor subunit 1-1 (415 aa).

The protein belongs to the eukaryotic release factor 1 family. Heterodimer of two subunits, one of which binds GTP.

Its subcellular location is the cytoplasm. Directs the termination of nascent peptide synthesis (translation) in response to the termination codons UAA, UAG and UGA. The sequence is that of Peptide chain release factor subunit 1-1 from Methanosarcina acetivorans (strain ATCC 35395 / DSM 2834 / JCM 12185 / C2A).